The following is a 297-amino-acid chain: Manganese efflux system protein MneP (297 aa).

6 helical membrane-spanning segments follow: residues 12–32 (VALI…FFGL), 43–63 (GIHS…IGIS), 85–105 (IVGI…ILSF), 111–131 (VPQY…EILY), 155–175 (GDIV…IGNS), and 177–197 (GWSY…YLIF).

The protein belongs to the cation diffusion facilitator (CDF) transporter (TC 2.A.4) family.

The protein resides in the cell membrane. In terms of biological role, primary efflux pump for manganese. May prevent manganese intoxication. The polypeptide is Manganese efflux system protein MneP (Bacillus subtilis (strain 168)).